The sequence spans 107 residues: MASTEEVSQERSENSIQVSMTKKPTFYARIGKRMFTGNEEKNPFDEVIITGLGNATKIAIGAASIMEKEDIGQIVKVQTAYFSSDRINRRIPKITIVLKKHPDFVAN.

2 positions are modified to N6-acetyllysine: Lys23 and Lys32.

It belongs to the histone-like Alba family. Homodimer. Interacts (acetylated and unacetylated) with Sir2A. It depends on a divalent metal cation as a cofactor. Acetylated. Exists in both acetylated and unacetylated forms but predominantly in an acetylated form. Deacetylated by Sir2A.

It localises to the nucleus. Its subcellular location is the chromosome. The protein resides in the telomere. The protein localises to the cytoplasm. Mild acetylation lowers protein interaction with DNA and high acetylation abolishes DNA-binding activity. DNA binding and endonuclease activity is modulated via deacetylation of Lys-23 by Sir2A. Inhibited in the presence of EDTA and EGTA. Possesses DNA-binding and endonuclease activities. Binds DNA cooperatively in sequence-independent manner at the DNA minor groove. Exhibits apurinic/apyrimidinic site-driven endonuclease activity. Binds RNA; shows high affinity for poly(A) and a lower affinity for poly(U) templates. In vitro, prevents transcription after DNA binding. Associates with the telomeric region, the subtelomeric TARE6 repeat sequence and the var gene promoters. The protein is Endonuclease ALBA3 of Plasmodium falciparum (isolate 3D7).